Consider the following 198-residue polypeptide: Recombination protein RecR (198 aa).

The C4-type zinc finger occupies 57–72; the sequence is CSVCGHITDRDPCYIC. Residues 80 to 175 enclose the Toprim domain; it reads SVVCVVQEPK…KVTRIAHGLP (96 aa).

This sequence belongs to the RecR family.

May play a role in DNA repair. It seems to be involved in an RecBC-independent recombinational process of DNA repair. It may act with RecF and RecO. The chain is Recombination protein RecR from Bacillus thuringiensis (strain Al Hakam).